Reading from the N-terminus, the 338-residue chain is Methionine synthase (338 aa).

Residues histidine 210, cysteine 212, glutamate 234, and cysteine 294 each coordinate Zn(2+).

Belongs to the archaeal MetE family. Requires Zn(2+) as cofactor.

It participates in amino-acid biosynthesis; L-methionine biosynthesis via de novo pathway. In terms of biological role, catalyzes the transfer of a methyl group to L-homocysteine resulting in methionine formation. The physiological methyl donor is unknown. The protein is Methionine synthase of Pyrococcus abyssi (strain GE5 / Orsay).